We begin with the raw amino-acid sequence, 768 residues long: Valine--tRNA ligase (768 aa).

A 'HIGH' region motif is present at residues 37-47; that stretch reads PTVSGKMHMGH. The 'KMSKS' region signature appears at 510-514; sequence KMSKS. Residue K513 coordinates ATP.

The protein belongs to the class-I aminoacyl-tRNA synthetase family. ValS type 2 subfamily.

It localises to the cytoplasm. The catalysed reaction is tRNA(Val) + L-valine + ATP = L-valyl-tRNA(Val) + AMP + diphosphate. Catalyzes the attachment of valine to tRNA(Val). As ValRS can inadvertently accommodate and process structurally similar amino acids such as threonine, to avoid such errors, it has a 'posttransfer' editing activity that hydrolyzes mischarged Thr-tRNA(Val) in a tRNA-dependent manner. This chain is Valine--tRNA ligase, found in Picrophilus torridus (strain ATCC 700027 / DSM 9790 / JCM 10055 / NBRC 100828 / KAW 2/3).